The sequence spans 195 residues: Thymidine kinase (195 aa).

ATP is bound by residues 15–22 (GSMFSGKS) and 88–91 (DEVQ). The active-site Proton acceptor is E89. F120 is a binding site for substrate. C145 and C148 together coordinate Zn(2+). Residues 170–174 (IILVG) and Y179 each bind substrate. Zn(2+) contacts are provided by C183 and C186.

Belongs to the thymidine kinase family. Homotetramer.

The protein resides in the cytoplasm. It catalyses the reaction thymidine + ATP = dTMP + ADP + H(+). The sequence is that of Thymidine kinase from Bacillus cereus (strain ATCC 14579 / DSM 31 / CCUG 7414 / JCM 2152 / NBRC 15305 / NCIMB 9373 / NCTC 2599 / NRRL B-3711).